A 274-amino-acid chain; its full sequence is Large ribosomal subunit protein uL2 (274 aa).

2 disordered regions span residues 34 to 54 and 224 to 261; these read LEKK…TRHI and VAMN…KTRA.

This sequence belongs to the universal ribosomal protein uL2 family. In terms of assembly, part of the 50S ribosomal subunit. Forms a bridge to the 30S subunit in the 70S ribosome.

One of the primary rRNA binding proteins. Required for association of the 30S and 50S subunits to form the 70S ribosome, for tRNA binding and peptide bond formation. It has been suggested to have peptidyltransferase activity; this is somewhat controversial. Makes several contacts with the 16S rRNA in the 70S ribosome. This is Large ribosomal subunit protein uL2 from Ectopseudomonas mendocina (strain ymp) (Pseudomonas mendocina).